The sequence spans 473 residues: Protein translocase subunit SecA (473 aa).

D127 contacts ATP. The tract at residues 424–447 (VAEGKAVHQDTSKQEPKKKQPIRK) is disordered. C457, C459, C468, and C469 together coordinate Zn(2+).

Belongs to the SecA family. Monomer and homodimer. Part of the essential Sec protein translocation apparatus which comprises SecA, SecYEG and auxiliary proteins SecDF. Other proteins may also be involved. Zn(2+) is required as a cofactor.

The protein localises to the cell membrane. Its subcellular location is the cytoplasm. It carries out the reaction ATP + H2O + cellular proteinSide 1 = ADP + phosphate + cellular proteinSide 2.. Part of the Sec protein translocase complex. Interacts with the SecYEG preprotein conducting channel. Has a central role in coupling the hydrolysis of ATP to the transfer of proteins into and across the cell membrane, serving as an ATP-driven molecular motor driving the stepwise translocation of polypeptide chains across the membrane. This chain is Protein translocase subunit SecA, found in Cytobacillus firmus (Bacillus firmus).